The sequence spans 601 residues: Probable translation initiation factor IF-2 (601 aa).

In terms of domain architecture, tr-type G spans 10 to 227 (LRAPIVVVLG…VLAGLAQRYL (218 aa)). The G1 stretch occupies residues 19–26 (GHVDAGKT). GTP is bound at residue 19–26 (GHVDAGKT). Residues 44 to 48 (TMTQH) form a G2 region. Residues 83 to 86 (DTPG) are G3. GTP-binding positions include 83–87 (DTPGH) and 137–140 (NKID). The segment at 137–140 (NKID) is G4. A G5 region spans residues 205–207 (SAV).

Belongs to the TRAFAC class translation factor GTPase superfamily. Classic translation factor GTPase family. IF-2 subfamily.

In terms of biological role, function in general translation initiation by promoting the binding of the formylmethionine-tRNA to ribosomes. Seems to function along with eIF-2. The protein is Probable translation initiation factor IF-2 of Thermofilum pendens (strain DSM 2475 / Hrk 5).